A 131-amino-acid polypeptide reads, in one-letter code: uncharacterized protein (131 aa).

Positions 8–124 (DILVVDDDPD…ELIRLVQQYC (117 aa)) constitute a Response regulatory domain. 4-aspartylphosphate is present on Asp57.

This is an uncharacterized protein from Leptolyngbya boryana (Plectonema boryanum).